We begin with the raw amino-acid sequence, 301 residues long: Probable 2-oxoglutarate-dependent dioxygenase AOP1 (301 aa).

A Fe2OG dioxygenase domain is found at 158–262; that stretch reads TYYLTRLMKY…RYSTGLFSIP (105 aa). Positions 186, 188, and 243 each coordinate Fe cation. 2-oxoglutarate is bound at residue R253.

The protein belongs to the iron/ascorbate-dependent oxidoreductase family. The cofactor is Fe(2+).

Probable 2-oxoglutarate-dependent dioxygenase that may be involved in glucosinolates biosynthesis. May play a role in the production of aliphatic glucosinolates. This Arabidopsis thaliana (Mouse-ear cress) protein is Probable 2-oxoglutarate-dependent dioxygenase AOP1 (AOP1).